The chain runs to 496 residues: Probable cytosol aminopeptidase (496 aa).

Residues Lys266 and Asp271 each contribute to the Mn(2+) site. Residue Lys278 is part of the active site. Asp289, Asp348, and Glu350 together coordinate Mn(2+). The active site involves Arg352.

It belongs to the peptidase M17 family. Mn(2+) is required as a cofactor.

The protein localises to the cytoplasm. The enzyme catalyses Release of an N-terminal amino acid, Xaa-|-Yaa-, in which Xaa is preferably Leu, but may be other amino acids including Pro although not Arg or Lys, and Yaa may be Pro. Amino acid amides and methyl esters are also readily hydrolyzed, but rates on arylamides are exceedingly low.. The catalysed reaction is Release of an N-terminal amino acid, preferentially leucine, but not glutamic or aspartic acids.. In terms of biological role, presumably involved in the processing and regular turnover of intracellular proteins. Catalyzes the removal of unsubstituted N-terminal amino acids from various peptides. The protein is Probable cytosol aminopeptidase of Pseudomonas syringae pv. tomato (strain ATCC BAA-871 / DC3000).